We begin with the raw amino-acid sequence, 159 residues long: Large ribosomal subunit protein uL15 (159 aa).

Residues 1-46 (MKLNELSPSVPKKNRKRIGRGNSSGWGKTAGKGSNGQNSRAGGGVK) form a disordered region. Positions 22–34 (NSSGWGKTAGKGS) are enriched in gly residues.

The protein belongs to the universal ribosomal protein uL15 family. Part of the 50S ribosomal subunit.

Functionally, binds to the 23S rRNA. The protein is Large ribosomal subunit protein uL15 of Fusobacterium nucleatum subsp. nucleatum (strain ATCC 25586 / DSM 15643 / BCRC 10681 / CIP 101130 / JCM 8532 / KCTC 2640 / LMG 13131 / VPI 4355).